The following is a 358-amino-acid chain: Thiol protease aleurain-like (358 aa).

A signal peptide spans 1 to 21 (MSVKLNLSSSILLILFAAAAS). Residues 22-140 (KEIGFDESNP…KGSHKITEAT (119 aa)) constitute a propeptide, activation peptide. Residue asparagine 125 is glycosylated (N-linked (GlcNAc...) asparagine). 2 cysteine pairs are disulfide-bonded: cysteine 162/cysteine 205 and cysteine 196/cysteine 238. The active site involves cysteine 165. N-linked (GlcNAc...) asparagine glycosylation is present at asparagine 254. Cysteine 296 and cysteine 346 form a disulfide bridge. Residues histidine 305 and asparagine 325 contribute to the active site.

The protein belongs to the peptidase C1 family.

It localises to the vacuole. The enzyme catalyses Hydrolysis of proteins, acting as an aminopeptidase (notably, cleaving Arg-|-Xaa bonds) as well as an endopeptidase.. Functionally, may play a role in proteolysis leading to mobilization of nitrogen during senescence and starvation. In Arabidopsis thaliana (Mouse-ear cress), this protein is Thiol protease aleurain-like.